Consider the following 611-residue polypeptide: Immunoglobulin superfamily member 8 (611 aa).

The N-terminal stretch at 1–25 (MGVPSPTPLSSLLLLLLILGTRCYA) is a signal peptide. Ig-like C2-type domains are found at residues 26–143 (RQVH…AKVE), 160–284 (PRGR…WVQV), 301–422 (SQLA…EAAS), and 429–554 (PVHV…ADYS). At 26–577 (RQVHVPRGPL…VYPYTHAVDT (552 aa)) the chain is on the extracellular side. Cys-47 and Cys-125 are joined by a disulfide. N-linked (GlcNAc...) asparagine glycosylation is found at Asn-48 and Asn-137. Cys-184 and Cys-268 are oxidised to a cystine. The EWI motif signature appears at 272-274 (EWI). 2 disulfide bridges follow: Cys-324–Cys-404 and Cys-460–Cys-542. Asn-325 is a glycosylation site (N-linked (GlcNAc...) asparagine). A Phosphoserine modification is found at Ser-516. A helical transmembrane segment spans residues 578–598 (LFVPLLVGTGVALVTGASVLA). The Cytoplasmic segment spans residues 599–611 (TITCCFMKRMRKR). S-palmitoyl cysteine attachment occurs at residues Cys-602 and Cys-603.

As to quaternary structure, interacts directly with CD82 and CD9/tetraspanin-29. Also interacts with integrin alpha-3/beta-1 and integrin alpha-4/beta-1. Part of a complex composed of CD9, PTGFRN and CD81. Interacts with CD81/tetraspanin-28. Expressed in lymphocytes as well as in many tissues with higher expression in brain. Detected in all regions of the brain with weak expression in the pituitary. Expressed selectively by neurons but not by glial cells. Expressed in myoblasts (at protein level).

Its subcellular location is the cell membrane. Its function is as follows. Member of the immunoglobulin superfamily (IgSF) that links tetraspanin-enriched microdomains to the actin cytoskeleton and plays several important roles in innate and adaptive immunity. Acts as an inducible receptor of HSPA8 on dendritic cells to enhance the CCL21/SLC-dependent migration of activated mature dendritic cells while attenuating their antigen-specific stimulatory capacities. In complex with alpha-actinins ACTN1 and ACTN4, regulates actin dynamics in the immune synapse and subsequent T-cell activation. Inhibits the entry of several viruses such as hepatitis C Virus (HCV) or HIV-1. Mechanistically, promotes a change in CD81 organization at the plasma membrane by significantly restricting its diffusion which in turn influences CD81 interaction with Claudin-1/CLDN1, preventing CLDN1 from acting as a co-receptor required for HCV entry. Accumulates at the presynaptic terminal, the producer cell side of the virological synapse, to prevent HIV-1 Env-mediated cell-cell fusion. Highly expressed on malignant cells with antigen presentation defects, interacts with NK receptor KLRA9 to suppress NK-cell cytotoxicity. May participate in the regulation of neurite outgrowth and maintenance of the neural network in the adult brain. This chain is Immunoglobulin superfamily member 8 (Igsf8), found in Mus musculus (Mouse).